A 233-amino-acid chain; its full sequence is 7-cyano-7-deazaguanine synthase (233 aa).

Leu8–Met18 is a binding site for ATP. 4 residues coordinate Zn(2+): Cys186, Cys194, Cys197, and Cys200.

This sequence belongs to the QueC family. Homodimer. Zn(2+) serves as cofactor.

It carries out the reaction 7-carboxy-7-deazaguanine + NH4(+) + ATP = 7-cyano-7-deazaguanine + ADP + phosphate + H2O + H(+). It participates in purine metabolism; 7-cyano-7-deazaguanine biosynthesis. Its function is as follows. Catalyzes the ATP-dependent conversion of 7-carboxy-7-deazaguanine (CDG) to 7-cyano-7-deazaguanine (preQ(0)). This Desulfitobacterium hafniense (strain DSM 10664 / DCB-2) protein is 7-cyano-7-deazaguanine synthase.